The sequence spans 305 residues: Tyrosine recombinase XerC (305 aa).

A Core-binding (CB) domain is found at threonine 4 to glutamate 95. In terms of domain architecture, Tyr recombinase spans leucine 116 to valine 298. Active-site residues include arginine 159, lysine 182, histidine 250, arginine 253, and histidine 276. Tyrosine 285 (O-(3'-phospho-DNA)-tyrosine intermediate) is an active-site residue.

Belongs to the 'phage' integrase family. XerC subfamily. Forms a cyclic heterotetrameric complex composed of two molecules of XerC and two molecules of XerD.

It localises to the cytoplasm. In terms of biological role, site-specific tyrosine recombinase, which acts by catalyzing the cutting and rejoining of the recombining DNA molecules. The XerC-XerD complex is essential to convert dimers of the bacterial chromosome into monomers to permit their segregation at cell division. It also contributes to the segregational stability of plasmids. This Rickettsia bellii (strain OSU 85-389) protein is Tyrosine recombinase XerC.